An 804-amino-acid chain; its full sequence is Elongation factor G, mitochondrial (804 aa).

A mitochondrion-targeting transit peptide spans methionine 1–arginine 63. In terms of domain architecture, tr-type G spans arginine 99–alanine 385. GTP is bound by residues alanine 108–threonine 115, aspartate 183–histidine 187, and asparagine 237–aspartate 240.

It belongs to the TRAFAC class translation factor GTPase superfamily. Classic translation factor GTPase family. EF-G/EF-2 subfamily.

It localises to the mitochondrion. The protein operates within protein biosynthesis; polypeptide chain elongation. Its function is as follows. Mitochondrial GTPase that catalyzes the GTP-dependent ribosomal translocation step during translation elongation. During this step, the ribosome changes from the pre-translocational (PRE) to the post-translocational (POST) state as the newly formed A-site-bound peptidyl-tRNA and P-site-bound deacylated tRNA move to the P and E sites, respectively. Catalyzes the coordinated movement of the two tRNA molecules, the mRNA and conformational changes in the ribosome. This is Elongation factor G, mitochondrial (mef1) from Botryotinia fuckeliana (strain B05.10) (Noble rot fungus).